A 540-amino-acid polypeptide reads, in one-letter code: Chaperonin GroEL (540 aa).

Residues 29 to 32, 86 to 90, G413, 478 to 480, and D494 contribute to the ATP site; these read TLGP, DGTTT, and DAL.

This sequence belongs to the chaperonin (HSP60) family. As to quaternary structure, forms a cylinder of 14 subunits composed of two heptameric rings stacked back-to-back. Interacts with the co-chaperonin GroES.

It is found in the cytoplasm. The enzyme catalyses ATP + H2O + a folded polypeptide = ADP + phosphate + an unfolded polypeptide.. Functionally, together with its co-chaperonin GroES, plays an essential role in assisting protein folding. The GroEL-GroES system forms a nano-cage that allows encapsulation of the non-native substrate proteins and provides a physical environment optimized to promote and accelerate protein folding. The polypeptide is Chaperonin GroEL (Clostridioides difficile (Peptoclostridium difficile)).